The primary structure comprises 79 residues: MKLSFLSLVLAIILVMALMYTPHAEAKAWADADADATAAADADADAVADALADAVAKIKIPWGKVKDFLVGGMKAVGKK.

The N-terminal stretch at 1–26 (MKLSFLSLVLAIILVMALMYTPHAEA) is a signal peptide. Residues 27–56 (KAWADADADATAAADADADAVADALADAVA) constitute a propeptide that is removed on maturation. Val76 bears the Valine amide mark.

Belongs to the formicidae venom precursor-01 superfamily. In terms of processing, the C-terminal amidation is important for antimicrobial activity, since a non-amidated synthetic peptide shows a reduced antimicrobial activity (2-20-fold depending on the strain tested). The amidation may play a positive role in the peptide conformation, since amidated peptide shows an increase of about 5% of helical content. Expressed by the venom gland.

It is found in the secreted. The protein localises to the target cell membrane. In terms of biological role, antimicrobial peptide that shows antimicrobial activities against all microorganisms tested with minimal inhibitory concentrations (MICs) values ranging from 0.45 to 97.5 umol/L. This peptide kills the microorganisms by permeabilizating the membranes. It shows a very weak hemolytic activity (HC(50)=325 umol/L) and weak cytotoxicity against human lymphocytes (LC(50)=67.8 umol/L). Gram-negative bacteria tested are E.coli (MIC=24.4 umol/L), C.sakazakii (MIC=5.8 umol/L), P.aeruginosa (MIC=8.7-12.2 umol/L), S.enterica (MIC=5.4 umol/L), and H.pylori (MIC=0.99-3.9 umol/L). Gram-positive bacteria tested are E.hirae (MIC=12.2 umol/L), S.aureus (MIC=3.0-6.4 umol/L), methicillin-resistant S.aureus (MRSA) (MIC=8.7 umol/L), S.xylosus (MIC=0.45-1.3 umol/L), and B.subtilis (MIC=24.4 umol/L). Fungi tested are A.niger (MIC=0.75 umol/L), C.albicans (MIC=17.3 umol/L), G.candidum (MIC=97.5 umol/L), and S.cerevisiae (MIC=6.1 umol/L). Finally the parasite tested is L.infantum (MIC=1.5 umol/L). This chain is M-myrmicitoxin(01)-Tb1a, found in Tetramorium bicarinatum (Tramp ant).